The following is a 246-amino-acid chain: Pyridoxine 5'-phosphate synthase (246 aa).

3-amino-2-oxopropyl phosphate is bound by residues asparagine 8 and arginine 19. Histidine 44 (proton acceptor) is an active-site residue. Arginine 46 and histidine 51 together coordinate 1-deoxy-D-xylulose 5-phosphate. Catalysis depends on glutamate 76, which acts as the Proton acceptor. Threonine 106 serves as a coordination point for 1-deoxy-D-xylulose 5-phosphate. The active-site Proton donor is histidine 198. Residues aspartate 199 and 221–222 (GH) contribute to the 3-amino-2-oxopropyl phosphate site.

Belongs to the PNP synthase family. In terms of assembly, homooctamer; tetramer of dimers.

It is found in the cytoplasm. It catalyses the reaction 3-amino-2-oxopropyl phosphate + 1-deoxy-D-xylulose 5-phosphate = pyridoxine 5'-phosphate + phosphate + 2 H2O + H(+). It functions in the pathway cofactor biosynthesis; pyridoxine 5'-phosphate biosynthesis; pyridoxine 5'-phosphate from D-erythrose 4-phosphate: step 5/5. In terms of biological role, catalyzes the complicated ring closure reaction between the two acyclic compounds 1-deoxy-D-xylulose-5-phosphate (DXP) and 3-amino-2-oxopropyl phosphate (1-amino-acetone-3-phosphate or AAP) to form pyridoxine 5'-phosphate (PNP) and inorganic phosphate. This Mesorhizobium japonicum (strain LMG 29417 / CECT 9101 / MAFF 303099) (Mesorhizobium loti (strain MAFF 303099)) protein is Pyridoxine 5'-phosphate synthase.